Consider the following 30-residue polypeptide: Cyclotide cter-G (30 aa).

Positions Gly1–Asn30 form a cross-link, cyclopeptide (Gly-Asn). 3 disulfides stabilise this stretch: Cys4–Cys20, Cys8–Cys22, and Cys13–Cys27.

Post-translationally, contains 3 disulfide bonds. This is a cyclic peptide.

Probably participates in a plant defense mechanism. This chain is Cyclotide cter-G, found in Clitoria ternatea (Butterfly pea).